We begin with the raw amino-acid sequence, 348 residues long: Chemokine C-C motif receptor-like 2 (348 aa).

Topologically, residues 1–43 are extracellular; sequence MANYTPAPEDDYDVFIEDDLSDDEIEPCTPYDPKILSAQLVPY. The helical transmembrane segment at 44–64 threads the bilayer; it reads LYTTVFMVGLLDNILVVFILV. Residues 65–76 lie on the Cytoplasmic side of the membrane; it reads KYKGLRQAENMS. Residues 77–97 form a helical membrane-spanning segment; it reads FLNLALSNLGFLLTLPFWAYA. The Extracellular segment spans residues 98-110; that stretch reads ASHGEGFDDPLCK. An intrachain disulfide couples cysteine 109 to cysteine 187. The helical transmembrane segment at 111-131 threads the bilayer; that stretch reads ILLLLYSIGLYSEAFFNVLLT. At 132 to 150 the chain is on the cytoplasmic side; that stretch reads VQRYKEFFHVRRRFSACRT. The chain crosses the membrane as a helical span at residues 151–171; it reads VAGSIFISVLVWVTATLVTLP. Topologically, residues 172-204 are extracellular; it reads ELVSYKPQMQSQKYKCFFTGLHFLPADETFWKH. The helical transmembrane segment at 205–225 threads the bilayer; the sequence is FLTLKMNILGFLLPLFAFVYC. Residues 226–244 are Cytoplasmic-facing; that stretch reads YVRMRKTLQFRERNYGLFK. A helical membrane pass occupies residues 245–265; it reads LVFTIMAVFLLMWGPYNIVLF. The Extracellular portion of the chain corresponds to 266–292; it reads LSAFNEHFSLHGCGSSYNLNKSVQITR. The N-linked (GlcNAc...) asparagine glycan is linked to asparagine 285. Residues 293-313 traverse the membrane as a helical segment; it reads IIAATHCCVNPLLYVFLDKAF. Topologically, residues 314 to 348 are cytoplasmic; it reads RKHLCHLFYLCSDTAPQPTEEPAQGASGEEYHLSS.

Belongs to the G-protein coupled receptor 1 family.

The protein resides in the cell membrane. In terms of biological role, receptor for CCL19 and chemerin/RARRES2. Does not appear to be a signaling receptor, but may have a role in modulating chemokine-triggered immune responses by capturing and internalizing CCL19 or by presenting RARRES2 ligand to CMKLR1, a functional signaling receptor. Plays a critical role for the development of Th2 responses. The protein is Chemokine C-C motif receptor-like 2 (CCRL2) of Bos taurus (Bovine).